Consider the following 56-residue polypeptide: UPF0391 membrane protein PSHAa0537 (56 aa).

The next 2 membrane-spanning stretches (helical) occupy residues 6 to 26 (ITFLVIALIAAVLGFGGIAGA) and 27 to 47 (AAGIAKIIFFIFLILLVISLV).

The protein belongs to the UPF0391 family.

It is found in the cell membrane. The sequence is that of UPF0391 membrane protein PSHAa0537 from Pseudoalteromonas translucida (strain TAC 125).